The primary structure comprises 78 residues: Large ribosomal subunit protein bL28 (78 aa).

Residues M1–N22 form a disordered region. A compositionally biased stretch (polar residues) spans R11–N22.

The protein belongs to the bacterial ribosomal protein bL28 family.

The chain is Large ribosomal subunit protein bL28 from Alkalilimnicola ehrlichii (strain ATCC BAA-1101 / DSM 17681 / MLHE-1).